Reading from the N-terminus, the 88-residue chain is Small ribosomal subunit protein bS20 (88 aa).

Residues 1–27 (MANIKSQIKRNKTNEKARLRNKAVKSS) form a disordered region.

The protein belongs to the bacterial ribosomal protein bS20 family.

In terms of biological role, binds directly to 16S ribosomal RNA. The polypeptide is Small ribosomal subunit protein bS20 (Streptomyces griseus subsp. griseus (strain JCM 4626 / CBS 651.72 / NBRC 13350 / KCC S-0626 / ISP 5235)).